Here is a 92-residue protein sequence, read N- to C-terminus: Small ribosomal subunit protein uS19 (92 aa).

This sequence belongs to the universal ribosomal protein uS19 family.

In terms of biological role, protein S19 forms a complex with S13 that binds strongly to the 16S ribosomal RNA. This Allorhizobium ampelinum (strain ATCC BAA-846 / DSM 112012 / S4) (Agrobacterium vitis (strain S4)) protein is Small ribosomal subunit protein uS19.